Consider the following 356-residue polypeptide: D-alanine--D-alanine ligase (356 aa).

One can recognise an ATP-grasp domain in the interval 134 to 339; sequence KQLFAHRGLP…YSDLIKKLIE (206 aa). An ATP-binding site is contributed by 167–222; the sequence is HDKLEYPVFVKPANLGSSVGISKCNNEEELKNGIEEAFQFDRKLVIEQGIEAREIE. Positions 293, 306, and 308 each coordinate Mg(2+).

Belongs to the D-alanine--D-alanine ligase family. Requires Mg(2+) as cofactor. Mn(2+) serves as cofactor.

The protein localises to the cytoplasm. The enzyme catalyses 2 D-alanine + ATP = D-alanyl-D-alanine + ADP + phosphate + H(+). The protein operates within cell wall biogenesis; peptidoglycan biosynthesis. Its function is as follows. Cell wall formation. The chain is D-alanine--D-alanine ligase from Staphylococcus saprophyticus subsp. saprophyticus (strain ATCC 15305 / DSM 20229 / NCIMB 8711 / NCTC 7292 / S-41).